The chain runs to 324 residues: Proto-oncogene Mas (324 aa).

At 1-35 (MDQSNMTSLAEEKAMNTSSRNASLGSSHPPIPIVH) the chain is on the extracellular side. N-linked (GlcNAc...) asparagine glycosylation is found at N5, N16, and N21. A helical transmembrane segment spans residues 36–60 (WVIMSISPLGFVENGILLWFLCFRM). The Cytoplasmic portion of the chain corresponds to 61–64 (RRNP). Residues 65-86 (FTVYITHLSIADISLLFCIFIL) form a helical membrane-spanning segment. The Extracellular portion of the chain corresponds to 87–103 (SIDYALDYELSSGHHYT). Residues 104–127 (IVTLSVTFLFGYNTGLYLLTAISV) traverse the membrane as a helical segment. Residues 128–148 (ERCLSVLYPIWYRCHRPKHQS) are Cytoplasmic-facing. The helical transmembrane segment at 149–171 (AFVCALLWALSCLVTTMEYVMCI) threads the bilayer. Residues 172–184 (DSGEESHSRSDCR) lie on the Extracellular side of the membrane. Residues 185–205 (AVIIFIAILSFLVFTPLMLVS) traverse the membrane as a helical segment. Residues 206-223 (STILVVKIRKNTWASHSS) lie on the Cytoplasmic side of the membrane. The helical transmembrane segment at 224–244 (KLYIVIMVTIIIFLIFAMPMR) threads the bilayer. Topologically, residues 245 to 262 (VLYLLYYEYWSAFGNLHN) are extracellular. Residues 263–283 (ISLLFSTINSSANPFIYFFVG) form a helical membrane-spanning segment. Over 284 to 324 (SSKKKRFRESLKVVLTRAFKDEMQPRRQEGNGNTVSIETVV) the chain is Cytoplasmic.

Belongs to the G-protein coupled receptor 1 family. In terms of assembly, interacts with AGTR1. Interacts with FLNA (via filamin repeat 21); increases PKA-mediated phosphorylation of FLNA.

It is found in the cell membrane. Acts specifically as a functional antagonist of AGTR1 (angiotensin-2 type 1 receptor), although it up-regulates AGTR1 receptor levels. Positive regulation of AGTR1 levels occurs through activation of the G-proteins GNA11 and GNAQ, and stimulation of the protein kinase C signaling cascade. The antagonist effect on AGTR1 function is probably due to AGTR1 being physically altered by MAS1. Receptor for angiotensin 1-7. The polypeptide is Proto-oncogene Mas (Mas1) (Mus musculus (Mouse)).